The following is a 305-amino-acid chain: Testis-expressed protein 52 (305 aa).

The segment at 284–305 is disordered; the sequence is HLSKAQASKSPARKRKRRPGHF. The segment covering 294 to 305 has biased composition (basic residues); it reads PARKRKRRPGHF.

In terms of tissue distribution, expressed in Testis.

The protein is Testis-expressed protein 52 of Homo sapiens (Human).